An 83-amino-acid polypeptide reads, in one-letter code: ATP synthase subunit c (83 aa).

A run of 2 helical transmembrane segments spans residues 10–30 (IAVALLIGMGALGTAIGFGLL) and 52–72 (MFIVAGLLDAVTMIGVGIALF).

Belongs to the ATPase C chain family. As to quaternary structure, F-type ATPases have 2 components, F(1) - the catalytic core - and F(0) - the membrane proton channel. F(1) has five subunits: alpha(3), beta(3), gamma(1), delta(1), epsilon(1). F(0) has three main subunits: a(1), b(2) and c(10-14). The alpha and beta chains form an alternating ring which encloses part of the gamma chain. F(1) is attached to F(0) by a central stalk formed by the gamma and epsilon chains, while a peripheral stalk is formed by the delta and b chains.

Its subcellular location is the cell inner membrane. F(1)F(0) ATP synthase produces ATP from ADP in the presence of a proton or sodium gradient. F-type ATPases consist of two structural domains, F(1) containing the extramembraneous catalytic core and F(0) containing the membrane proton channel, linked together by a central stalk and a peripheral stalk. During catalysis, ATP synthesis in the catalytic domain of F(1) is coupled via a rotary mechanism of the central stalk subunits to proton translocation. Its function is as follows. Key component of the F(0) channel; it plays a direct role in translocation across the membrane. A homomeric c-ring of between 10-14 subunits forms the central stalk rotor element with the F(1) delta and epsilon subunits. The sequence is that of ATP synthase subunit c from Shewanella loihica (strain ATCC BAA-1088 / PV-4).